Reading from the N-terminus, the 744-residue chain is 3-isopropylmalate dehydratase (744 aa).

Residues C341, C401, and C404 each contribute to the [4Fe-4S] cluster site.

Belongs to the aconitase/IPM isomerase family. Monomer. [4Fe-4S] cluster serves as cofactor.

The catalysed reaction is (2R,3S)-3-isopropylmalate = (2S)-2-isopropylmalate. It participates in amino-acid biosynthesis; L-leucine biosynthesis; L-leucine from 3-methyl-2-oxobutanoate: step 2/4. In terms of biological role, catalyzes the isomerization between 2-isopropylmalate and 3-isopropylmalate, via the formation of 2-isopropylmaleate. The sequence is that of 3-isopropylmalate dehydratase (leu1) from Phycomyces blakesleeanus (strain ATCC 8743b / DSM 1359 / FGSC 10004 / NBRC 33097 / NRRL 1555).